The chain runs to 202 residues: Large ribosomal subunit protein eL13 (202 aa).

The segment at 183–202 (GIREKRAKEKAEAEAEKAKK) is disordered.

Belongs to the eukaryotic ribosomal protein eL13 family. In terms of assembly, component of the large ribosomal subunit. Mature ribosomes consist of a small (40S) and a large (60S) subunit. The 40S subunit contains about 32 different proteins and 1 molecule of RNA (18S). The 60S subunit contains 45 different proteins and 3 molecules of RNA (25S, 5.8S and 5S).

It localises to the cytoplasm. Component of the ribosome, a large ribonucleoprotein complex responsible for the synthesis of proteins in the cell. The small ribosomal subunit (SSU) binds messenger RNAs (mRNAs) and translates the encoded message by selecting cognate aminoacyl-transfer RNA (tRNA) molecules. The large subunit (LSU) contains the ribosomal catalytic site termed the peptidyl transferase center (PTC), which catalyzes the formation of peptide bonds, thereby polymerizing the amino acids delivered by tRNAs into a polypeptide chain. The nascent polypeptides leave the ribosome through a tunnel in the LSU and interact with protein factors that function in enzymatic processing, targeting, and the membrane insertion of nascent chains at the exit of the ribosomal tunnel. This Candida albicans (strain SC5314 / ATCC MYA-2876) (Yeast) protein is Large ribosomal subunit protein eL13.